The primary structure comprises 191 residues: MSDATLSLKQRLGGRSLYLVGMMGSGKTSTGRPLAEQLGYGFVDADAVIEQAAGCSIPEIFERDGEAGFRALESQVLNAIGQRHSLVVATGGGVVTQQENWGLLHSGIVVWLDVVPEQLMQRLRADSTVRPLLQTEDPDAALNALLNQRRPLYAEADLTVVINQETPLAVADGILQLLPSLLKDPTQRRTD.

An ATP-binding site is contributed by glycine 24–serine 29. Mg(2+) is bound at residue threonine 28. The substrate site is built by aspartate 46, arginine 70, and glycine 92. Arginine 130 contacts ATP. Arginine 149 lines the substrate pocket.

It belongs to the shikimate kinase family. In terms of assembly, monomer. Requires Mg(2+) as cofactor.

Its subcellular location is the cytoplasm. It carries out the reaction shikimate + ATP = 3-phosphoshikimate + ADP + H(+). Its pathway is metabolic intermediate biosynthesis; chorismate biosynthesis; chorismate from D-erythrose 4-phosphate and phosphoenolpyruvate: step 5/7. Its function is as follows. Catalyzes the specific phosphorylation of the 3-hydroxyl group of shikimic acid using ATP as a cosubstrate. The protein is Shikimate kinase of Parasynechococcus marenigrum (strain WH8102).